Here is a 139-residue protein sequence, read N- to C-terminus: 6,7-dimethyl-8-ribityllumazine synthase (139 aa).

Residues phenylalanine 13, 45–47 (VFD), and 69–71 (AVI) each bind 5-amino-6-(D-ribitylamino)uracil. Position 74–75 (74–75 (AT)) interacts with (2S)-2-hydroxy-3-oxobutyl phosphate. Histidine 77 (proton donor) is an active-site residue. Leucine 102 provides a ligand contact to 5-amino-6-(D-ribitylamino)uracil. Arginine 117 lines the (2S)-2-hydroxy-3-oxobutyl phosphate pocket.

Belongs to the DMRL synthase family.

It catalyses the reaction (2S)-2-hydroxy-3-oxobutyl phosphate + 5-amino-6-(D-ribitylamino)uracil = 6,7-dimethyl-8-(1-D-ribityl)lumazine + phosphate + 2 H2O + H(+). It participates in cofactor biosynthesis; riboflavin biosynthesis; riboflavin from 2-hydroxy-3-oxobutyl phosphate and 5-amino-6-(D-ribitylamino)uracil: step 1/2. Catalyzes the formation of 6,7-dimethyl-8-ribityllumazine by condensation of 5-amino-6-(D-ribitylamino)uracil with 3,4-dihydroxy-2-butanone 4-phosphate. This is the penultimate step in the biosynthesis of riboflavin. The sequence is that of 6,7-dimethyl-8-ribityllumazine synthase from Methanothermobacter thermautotrophicus (strain ATCC 29096 / DSM 1053 / JCM 10044 / NBRC 100330 / Delta H) (Methanobacterium thermoautotrophicum).